Reading from the N-terminus, the 233-residue chain is 7-cyano-7-deazaguanine synthase (233 aa).

7–17 (LSGGLDSAVTS) serves as a coordination point for ATP. Zn(2+) contacts are provided by Cys-195, Cys-206, Cys-209, and Cys-212.

Belongs to the QueC family. Zn(2+) serves as cofactor.

The enzyme catalyses 7-carboxy-7-deazaguanine + NH4(+) + ATP = 7-cyano-7-deazaguanine + ADP + phosphate + H2O + H(+). It participates in purine metabolism; 7-cyano-7-deazaguanine biosynthesis. Functionally, catalyzes the ATP-dependent conversion of 7-carboxy-7-deazaguanine (CDG) to 7-cyano-7-deazaguanine (preQ(0)). The chain is 7-cyano-7-deazaguanine synthase from Methanococcus maripaludis (strain C7 / ATCC BAA-1331).